The primary structure comprises 359 residues: 3-dehydroquinate synthase (359 aa).

Residues 70 to 75 (DAEGGK), 104 to 108 (GAATD), 128 to 129 (TT), Lys-141, and Lys-150 each bind NAD(+). Zn(2+) is bound by residues Glu-183, His-246, and His-262.

It belongs to the sugar phosphate cyclases superfamily. Dehydroquinate synthase family. It depends on Co(2+) as a cofactor. The cofactor is Zn(2+). NAD(+) is required as a cofactor.

Its subcellular location is the cytoplasm. The catalysed reaction is 7-phospho-2-dehydro-3-deoxy-D-arabino-heptonate = 3-dehydroquinate + phosphate. It participates in metabolic intermediate biosynthesis; chorismate biosynthesis; chorismate from D-erythrose 4-phosphate and phosphoenolpyruvate: step 2/7. Its function is as follows. Catalyzes the conversion of 3-deoxy-D-arabino-heptulosonate 7-phosphate (DAHP) to dehydroquinate (DHQ). The sequence is that of 3-dehydroquinate synthase from Mycolicibacterium vanbaalenii (strain DSM 7251 / JCM 13017 / BCRC 16820 / KCTC 9966 / NRRL B-24157 / PYR-1) (Mycobacterium vanbaalenii).